Consider the following 1028-residue polypeptide: Golgin subfamily A member 2 (1028 aa).

The tract at residues 1 to 112 (MADQNRQIKL…NRPLSSTESL (112 aa)) is disordered. The segment covering 40-60 (KGDQTDAPADRRSPENERVDV) has biased composition (basic and acidic residues). A compositionally biased stretch (polar residues) spans 74–87 (NPASAINTDNSAPQ). 5 coiled-coil regions span residues 162 to 200 (NTQL…EQGA), 233 to 388 (ARQK…YAVQ), 414 to 690 (RDST…LLNG), 738 to 769 (LSRV…LTAL), and 799 to 840 (HEAL…LSGE). The disordered stretch occupies residues 259–280 (RTLSSVSTQQKQHERHNKELEK). Residues 756–791 (RRIHQDTRQQLTALSHDHHHHHHHEPHSTCAETDGS) are disordered. Residues 944-981 (AMDVSSSPQSSTAEIQSQSSERPAADPISSPSLRPQED) form a disordered region. The segment covering 945-964 (MDVSSSPQSSTAEIQSQSSE) has biased composition (polar residues).

It belongs to the GOLGA2 family.

The protein localises to the golgi apparatus. It localises to the cis-Golgi network membrane. The protein resides in the endoplasmic reticulum-Golgi intermediate compartment membrane. It is found in the cytoplasm. Its subcellular location is the cytoskeleton. The protein localises to the spindle pole. Functionally, peripheral membrane component of the cis-Golgi stack that acts as a membrane skeleton that maintains the structure of the Golgi apparatus, and as a vesicle thether that facilitates vesicle fusion to the Golgi membrane. Required for normal protein transport from the endoplasmic reticulum to the Golgi apparatus and the cell membrane. Plays a central role in mitotic Golgi disassembly. Also plays a key role in spindle pole assembly and centrosome organization. It probably promotes mitotic spindle pole assembly by activating assembly factors to nucleate microtubules around the Golgi and capture them to couple mitotic membranes to the spindle. Also required for the Golgi ribbon formation and glycosylation of membrane and secretory proteins. This chain is Golgin subfamily A member 2, found in Danio rerio (Zebrafish).